A 42-amino-acid polypeptide reads, in one-letter code: Photosystem I reaction center subunit IX (42 aa).

The chain crosses the membrane as a helical span at residues 7–27 (YLSTAPVLAAIWFGILAGLLI).

The protein belongs to the PsaJ family.

The protein localises to the plastid. It is found in the chloroplast thylakoid membrane. In terms of biological role, may help in the organization of the PsaE and PsaF subunits. This chain is Photosystem I reaction center subunit IX, found in Staurastrum punctulatum (Green alga).